The chain runs to 669 residues: Epithelial sodium channel subunit alpha (669 aa).

The interval 1–43 (MEGNKLEEQDSSPPQSTPGLMKGNKREEQGLGPEPAAPQQPTA) is disordered. The Cytoplasmic portion of the chain corresponds to 1–85 (MEGNKLEEQD…CSQHNRMKTA (85 aa)). The segment covering 33–42 (PEPAAPQQPT) has biased composition (low complexity). Residues 86–106 (FWAVLWLCTFGMMYWQFGLLF) traverse the membrane as a helical segment. Residues 107–562 (GEYFSYPVSL…SQWSLWFGSS (456 aa)) are Extracellular-facing. Intrachain disulfides connect C133–C305, C229–C236, C282–C289, C394–C479, C416–C456, C416–C475, C420–C471, C429–C456, C429–C479, and C431–C445. The tract at residues 175-243 (RSRRDLRGTL…SDCFYQTYSS (69 aa)) is gating release of inhibition by proteolysis (GRIP); protease-sensitive region that is responsible for the proteolytic activation of the channel. The helical transmembrane segment at 563–583 (VLSVVEMAELVFDLLVIMFLM) threads the bilayer. The Cytoplasmic segment spans residues 584–669 (LLRRFRSRYW…SSSTCPLGGP (86 aa)). Positions 620-669 (HPMSLSLSQPGPAPSPALTAPPPAYATLGPRPSPGGSAGASSSTCPLGGP) are disordered. The span at 630-643 (GPAPSPALTAPPPA) shows a compositional bias: pro residues. The PY motif; recruits WW domain-containing proteins and is thereby required for ubiquitination and inhibition of the channel by NEDD4 and NEDD4L motif lies at 640–644 (PPPAY).

The protein belongs to the amiloride-sensitive sodium channel (TC 1.A.6) family. SCNN1A subfamily. Heterotrimer; containing an alpha/SCNN1A, a beta/SCNN1B and a gamma/SCNN1G subunit. Interacts with WWP1 (via WW domains). Interacts with WWP2 (via WW domains); inhibits the channel. Interacts with BPIFA1; the interaction is indirect via SCNN1B and inhibits the proteolytic processing of SCNN1A and SCNN1G and the activation of ENaC. Interacts with the full-length immature form of PCSK9 (pro-PCSK9); inhibits ENaC by promoting its proteasomal degradation. Post-translationally, ubiquitinated. Can be ubiquitinated at multiple sites and undergo monoubiquitination and polyubiquitination. Ubiquitination by NEDD4 or NEDD4L inhibits the ENaC channel through endocytosis, intracellular retention and degradation of its individual subunits. ENaC is activated through the proteolytic maturation of its subunits. Furin cleaves the SCNN1A subunit, which results in a stepwise increase in the open probability of the channel due to the release of an inhibitory tract. BPIFA1, which is recruited by the SCNN1B subunit, prevents the proteolytic activation of ENaC. In terms of processing, N-glycosylated. In terms of tissue distribution, expressed in the female reproductive tract, from the fimbrial end of the fallopian tube to the endometrium (at protein level). Expressed in kidney (at protein level). In the respiratory tract, expressed in the bronchial epithelium (at protein level). Highly expressed in lung. Detected at intermediate levels in pancreas and liver, and at low levels in heart and placenta. in skin, expressed in keratinocytes, melanocytes and Merkel cells of the epidermal sub-layers, stratum basale, stratum spinosum and stratum granulosum (at protein level). Expressed in the outer root sheath of the hair follicles (at protein level). Detected in both peripheral and central cells of the sebaceous gland (at protein level). Expressed by eccrine sweat glands (at protein level). In skin, also expressed by arrector pili muscle cells and intradermal adipocytes. Isoform 1 and isoform 2 predominate in all tissues. As to expression, detected in lung and heart.

It is found in the apical cell membrane. The protein resides in the cell projection. Its subcellular location is the cilium. The protein localises to the cytoplasmic granule. It localises to the cytoplasm. It is found in the cytoplasmic vesicle. The protein resides in the secretory vesicle. Its subcellular location is the acrosome. The protein localises to the flagellum. The catalysed reaction is Na(+)(in) = Na(+)(out). Its activity is regulated as follows. Originally identified and characterized by its inhibition by the diuretic drug amiloride. Inhibited by phenamil. Its function is as follows. This is one of the three pore-forming subunits of the heterotrimeric epithelial sodium channel (ENaC), a critical regulator of sodium balance and fluid homeostasis. ENaC operates in epithelial tissues, where it mediates the electrodiffusion of sodium ions from extracellular fluid through the apical membrane of cells, with water following osmotically. It plays a key role in maintaining sodium homeostasis through electrogenic sodium reabsorption in the kidneys. Additionally, ENaC is essential for airway surface liquid homeostasis, which is crucial for proper mucus clearance. Not functional. This is Epithelial sodium channel subunit alpha from Homo sapiens (Human).